A 229-amino-acid chain; its full sequence is MEHSFKTIAAGVVIVVLLLQQAPVLIRATDADPLQDFCVADLDSKVTVNGHACKPASAAGDEFLFSSKIATGGDVNANPNGSNVTELDVAEWPGVNTLGVSMNRVDFAPGGTNPPHVHPRATEVGIVLRGELLVGIIGTLDTGNRYYSKVVRAGETFVIPRGLMHFQFNVGKTEATMVVSFNSQNPGIVFVPLTLFGSNPPIPTPVLVKALRVDAGVVELLKSKFTGGY.

An N-terminal signal peptide occupies residues 1 to 31 (MEHSFKTIAAGVVIVVLLLQQAPVLIRATDA). C38 and C53 are oxidised to a cystine. One can recognise a Cupin type-1 domain in the interval 67–219 (SKIATGGDVN…ALRVDAGVVE (153 aa)). Residues N80 and N83 are each glycosylated (N-linked (GlcNAc...) asparagine). Mn(2+) is bound by residues H116, H118, E123, and H165.

It belongs to the germin family. As to quaternary structure, oligomer (believed to be a pentamer but probably hexamer).

It is found in the secreted. The protein resides in the extracellular space. The protein localises to the apoplast. Functionally, may play a role in plant defense. Probably has no oxalate oxidase activity even if the active site is conserved. In Oryza sativa subsp. japonica (Rice), this protein is Germin-like protein 3-6.